Consider the following 560-residue polypeptide: NRAMP-like transporter smf-3 (560 aa).

The Cytoplasmic portion of the chain corresponds to 1–43 (MEGEMKCPIEEIREKPEMRKAQQTYEVQVEVEDTPDTTFSWRK). Residues 44-64 (LWAFTGPGFLMSIAYLDPGNI) traverse the membrane as a helical segment. Residues 65–71 (ESDLQAG) lie on the Extracellular side of the membrane. The helical transmembrane segment at 72-92 (AISYFKLIWVLLVAHIMGLLL) threads the bilayer. At 93 to 120 (QRLAARLGVVSGKHMAEIAFSYYPKIPR) the chain is on the cytoplasmic side. A helical transmembrane segment spans residues 121–141 (LVLWMLVESAIVGSDMQEVIG). The Extracellular segment spans residues 142–152 (TAISFYLLSNG). A helical transmembrane segment spans residues 153-173 (VIPLWAGVLITICDTFTFLFL). Residues 174–182 (EKYGVRKFE) lie on the Cytoplasmic side of the membrane. The helical transmembrane segment at 183 to 203 (AFFCFLITCMAITFGYEFGVS) threads the bilayer. Residues 204–229 (APDAGKMFSGMFVPWCNGCDNNMVMQ) lie on the Extracellular side of the membrane. A helical membrane pass occupies residues 230-250 (GVAIIGAVIMPHNFYLHSALV). The Cytoplasmic segment spans residues 251-268 (KSRRVDRRRAEKVTEANK). The helical transmembrane segment at 269–289 (YFFIESAFALFVSFIINTLVI) threads the bilayer. Topologically, residues 290–339 (SVFAQGMYGKTNQDIRDTCYNNTHNGMPDFYKVEFPANNDAAQSDIYHAG) are extracellular. Asparagine 310 is a glycosylation site (N-linked (GlcNAc...) asparagine). The helical transmembrane segment at 340 to 360 (IFLGCTFGIFALYVWAVGILA) threads the bilayer. Over 361-390 (AGQSSTMTGTYAGQFAMEGFIQIKLPQWKR) the chain is Cytoplasmic. The helical transmembrane segment at 391-411 (ILITRSLAILPTLAVVIFSGG) threads the bilayer. The Extracellular portion of the chain corresponds to 412–420 (IDNISSLND). N-linked (GlcNAc...) asparagine glycosylation occurs at asparagine 414. A helical membrane pass occupies residues 421-441 (FLNCLQLIQLPFALIPVLTFV). The Cytoplasmic segment spans residues 442–458 (SDRNIMHEYKLASVSKV). A helical transmembrane segment spans residues 459–479 (VSIVISLIILFINFYFLYSWI). Topologically, residues 480 to 486 (GSTFGYN) are extracellular. The chain crosses the membrane as a helical span at residues 487–507 (AVSIPITIFCAIFYIIFIAYL). Topologically, residues 508-560 (TYYCLVAMEFISPIQTKWLAEPIYHDFDAPWLEDSENPSTKNTISDDELSMRY) are cytoplasmic.

Belongs to the NRAMP family. In terms of tissue distribution, expressed in dopaminergic neurons (at protein level). Expressed in intestine with a weaker expression in the most proximal and distal regions. Weakly expressed in the hyp1-6, hyp7 and hyp8-12 hypodermis and in head and tail neurons.

Its subcellular location is the apical cell membrane. It localises to the cytoplasmic vesicle membrane. In terms of biological role, probable divalent metal ion transporter which regulates the uptake of several heavy metals such as Mn(2+), Al(3+) and iron. Plays a role in modulating Al(3+)-induced dopamine (DA) neuron degeneration through the intracellular sequestration of Al(3+). This chain is NRAMP-like transporter smf-3, found in Caenorhabditis elegans.